Consider the following 255-residue polypeptide: Malonyl-[acyl-carrier protein] O-methyltransferase (255 aa).

This sequence belongs to the methyltransferase superfamily.

The enzyme catalyses malonyl-[ACP] + S-adenosyl-L-methionine = malonyl-[ACP] methyl ester + S-adenosyl-L-homocysteine. The protein operates within cofactor biosynthesis; biotin biosynthesis. Functionally, converts the free carboxyl group of a malonyl-thioester to its methyl ester by transfer of a methyl group from S-adenosyl-L-methionine (SAM). It allows to synthesize pimeloyl-ACP via the fatty acid synthetic pathway. The sequence is that of Malonyl-[acyl-carrier protein] O-methyltransferase from Acinetobacter baylyi (strain ATCC 33305 / BD413 / ADP1).